The chain runs to 108 residues: uncharacterized protein (108 aa).

The protein belongs to the baculoviridae 11 kDa protein family.

This is an uncharacterized protein from Orgyia pseudotsugata (Douglas-fir tussock moth).